The chain runs to 137 residues: Nucleoside diphosphate kinase (137 aa).

6 residues coordinate ATP: K9, F57, R85, T91, R102, and N112. The active-site Pros-phosphohistidine intermediate is the H115.

The protein belongs to the NDK family. In terms of assembly, homotetramer. It depends on Mg(2+) as a cofactor.

It localises to the cytoplasm. The catalysed reaction is a 2'-deoxyribonucleoside 5'-diphosphate + ATP = a 2'-deoxyribonucleoside 5'-triphosphate + ADP. It catalyses the reaction a ribonucleoside 5'-diphosphate + ATP = a ribonucleoside 5'-triphosphate + ADP. In terms of biological role, major role in the synthesis of nucleoside triphosphates other than ATP. The ATP gamma phosphate is transferred to the NDP beta phosphate via a ping-pong mechanism, using a phosphorylated active-site intermediate. This chain is Nucleoside diphosphate kinase, found in Desulfotalea psychrophila (strain LSv54 / DSM 12343).